The following is a 170-amino-acid chain: MSKKIGLFYGTQTGKTESVAEIIRDEFGNDVVTLHDVSQAEVTDLNDYQYLIIGCPTWNIGELQSDWEGLYSELDDVDFNGKLVAYFGTGDQIGYADNFQDAIGILEEKISQRGGKTVGYWSTDGYDFNDSKALRNGKFVGLALDEDNQSDLTDDRIKSWVAQLKSEFGL.

The Flavodoxin-like domain maps to 5–165 (IGLFYGTQTG…RIKSWVAQLK (161 aa)).

It belongs to the flavodoxin family. Requires FMN as cofactor.

Low-potential electron donor to a number of redox enzymes. In Nostoc sp. (strain PCC 7120 / SAG 25.82 / UTEX 2576), this protein is Flavodoxin (isiB).